A 102-amino-acid polypeptide reads, in one-letter code: Large ribosomal subunit protein bL21 (102 aa).

This sequence belongs to the bacterial ribosomal protein bL21 family. Part of the 50S ribosomal subunit. Contacts protein L20.

Functionally, this protein binds to 23S rRNA in the presence of protein L20. This Geobacter metallireducens (strain ATCC 53774 / DSM 7210 / GS-15) protein is Large ribosomal subunit protein bL21.